The following is a 398-amino-acid chain: Bifunctional enzyme IspD/IspF (398 aa).

Residues M1–I237 form a 2-C-methyl-D-erythritol 4-phosphate cytidylyltransferase region. The 2-C-methyl-D-erythritol 2,4-cyclodiphosphate synthase stretch occupies residues R238 to Q398. Residues D244 and H246 each coordinate a divalent metal cation. 4-CDP-2-C-methyl-D-erythritol 2-phosphate-binding positions include D244 to H246 and H270 to S271. H278 is a binding site for a divalent metal cation. 4-CDP-2-C-methyl-D-erythritol 2-phosphate contacts are provided by residues D292–G294, T368–E371, F375, and R378.

It in the N-terminal section; belongs to the IspD/TarI cytidylyltransferase family. IspD subfamily. This sequence in the C-terminal section; belongs to the IspF family. It depends on a divalent metal cation as a cofactor.

It catalyses the reaction 2-C-methyl-D-erythritol 4-phosphate + CTP + H(+) = 4-CDP-2-C-methyl-D-erythritol + diphosphate. The enzyme catalyses 4-CDP-2-C-methyl-D-erythritol 2-phosphate = 2-C-methyl-D-erythritol 2,4-cyclic diphosphate + CMP. Its pathway is isoprenoid biosynthesis; isopentenyl diphosphate biosynthesis via DXP pathway; isopentenyl diphosphate from 1-deoxy-D-xylulose 5-phosphate: step 2/6. It functions in the pathway isoprenoid biosynthesis; isopentenyl diphosphate biosynthesis via DXP pathway; isopentenyl diphosphate from 1-deoxy-D-xylulose 5-phosphate: step 4/6. In terms of biological role, bifunctional enzyme that catalyzes the formation of 4-diphosphocytidyl-2-C-methyl-D-erythritol from CTP and 2-C-methyl-D-erythritol 4-phosphate (MEP) (IspD), and catalyzes the conversion of 4-diphosphocytidyl-2-C-methyl-D-erythritol 2-phosphate (CDP-ME2P) to 2-C-methyl-D-erythritol 2,4-cyclodiphosphate (ME-CPP) with a corresponding release of cytidine 5-monophosphate (CMP) (IspF). The chain is Bifunctional enzyme IspD/IspF from Bartonella tribocorum (strain CIP 105476 / IBS 506).